The primary structure comprises 602 residues: ATP-dependent RNA helicase DeaD (602 aa).

The short motif at 6 to 34 is the Q motif element; it reads MTFSSFGLNSCIITALNDIGYVQPSPIQA. The Helicase ATP-binding domain occupies 37 to 208; the sequence is IPYLIKGKDV…RRFMKNPKEI (172 aa). 50 to 57 is an ATP binding site; sequence AQTGSGKT. The DEAD box motif lies at 156-159; it reads DEAD. Residues 231-378 enclose the Helicase C-terminal domain; sequence KTDALIRFLE…EVNLPKSDFL (148 aa).

It belongs to the DEAD box helicase family. DeaD/CsdA subfamily.

The protein localises to the cytoplasm. It catalyses the reaction ATP + H2O = ADP + phosphate + H(+). Functionally, DEAD-box RNA helicase involved in various cellular processes at low temperature, including ribosome biogenesis, mRNA degradation and translation initiation. The chain is ATP-dependent RNA helicase DeaD from Buchnera aphidicola subsp. Baizongia pistaciae (strain Bp).